Consider the following 89-residue polypeptide: Small ribosomal subunit protein uS15 (89 aa).

The protein belongs to the universal ribosomal protein uS15 family. Part of the 30S ribosomal subunit. Forms a bridge to the 50S subunit in the 70S ribosome, contacting the 23S rRNA.

One of the primary rRNA binding proteins, it binds directly to 16S rRNA where it helps nucleate assembly of the platform of the 30S subunit by binding and bridging several RNA helices of the 16S rRNA. Its function is as follows. Forms an intersubunit bridge (bridge B4) with the 23S rRNA of the 50S subunit in the ribosome. The chain is Small ribosomal subunit protein uS15 from Levilactobacillus brevis (strain ATCC 367 / BCRC 12310 / CIP 105137 / JCM 1170 / LMG 11437 / NCIMB 947 / NCTC 947) (Lactobacillus brevis).